A 21-amino-acid polypeptide reads, in one-letter code: thr operon leader peptide (21 aa).

This sequence belongs to the thr operon leader peptide family.

Its function is as follows. This protein is involved in control of the biosynthesis of threonine. The protein is thr operon leader peptide of Shigella boydii serotype 18 (strain CDC 3083-94 / BS512).